Reading from the N-terminus, the 84-residue chain is Transcription elongation factor 1 homolog (84 aa).

Residues Cys26, Cys29, Cys50, and Cys53 each coordinate Zn(2+).

The protein belongs to the ELOF1 family.

It is found in the nucleus. Transcription elongation factor implicated in the maintenance of proper chromatin structure in actively transcribed regions. This Caenorhabditis elegans protein is Transcription elongation factor 1 homolog.